Here is a 200-residue protein sequence, read N- to C-terminus: NADH-quinone oxidoreductase subunit C (200 aa).

It belongs to the complex I 30 kDa subunit family. NDH-1 is composed of 14 different subunits. Subunits NuoB, C, D, E, F, and G constitute the peripheral sector of the complex.

Its subcellular location is the cell inner membrane. It catalyses the reaction a quinone + NADH + 5 H(+)(in) = a quinol + NAD(+) + 4 H(+)(out). In terms of biological role, NDH-1 shuttles electrons from NADH, via FMN and iron-sulfur (Fe-S) centers, to quinones in the respiratory chain. The immediate electron acceptor for the enzyme in this species is believed to be ubiquinone. Couples the redox reaction to proton translocation (for every two electrons transferred, four hydrogen ions are translocated across the cytoplasmic membrane), and thus conserves the redox energy in a proton gradient. This chain is NADH-quinone oxidoreductase subunit C, found in Burkholderia vietnamiensis (strain G4 / LMG 22486) (Burkholderia cepacia (strain R1808)).